The primary structure comprises 185 residues: HTH-type transcriptional regulator Hpr (185 aa).

Positions 13-157 (AMIFSQRIAQ…LIAILRNIYG (145 aa)) constitute an HTH marR-type domain. The H-T-H motif DNA-binding region spans 63–86 (ISEIAKFGVMHVSTAFNFSKKLEE).

In terms of assembly, homodimer.

Negative regulator of protease production and sporulation. The chain is HTH-type transcriptional regulator Hpr from Bacillus mycoides (strain KBAB4) (Bacillus weihenstephanensis).